The sequence spans 159 residues: Transcriptional repressor NrdR (159 aa).

A zinc finger spans residues C3–C34. In terms of domain architecture, ATP-cone spans P49–E139.

This sequence belongs to the NrdR family. Requires Zn(2+) as cofactor.

Functionally, negatively regulates transcription of bacterial ribonucleotide reductase nrd genes and operons by binding to NrdR-boxes. This is Transcriptional repressor NrdR from Burkholderia vietnamiensis (strain G4 / LMG 22486) (Burkholderia cepacia (strain R1808)).